A 49-amino-acid chain; its full sequence is Large ribosomal subunit protein bL33A (49 aa).

The protein belongs to the bacterial ribosomal protein bL33 family.

The protein is Large ribosomal subunit protein bL33A of Staphylococcus haemolyticus (strain JCSC1435).